A 301-amino-acid polypeptide reads, in one-letter code: 4-hydroxy-tetrahydrodipicolinate synthase (301 aa).

Thr53 serves as a coordination point for pyruvate. Residue Tyr142 is the Proton donor/acceptor of the active site. Lys170 acts as the Schiff-base intermediate with substrate in catalysis. Position 212 (Val212) interacts with pyruvate.

This sequence belongs to the DapA family. As to quaternary structure, homotetramer; dimer of dimers.

The protein localises to the cytoplasm. The enzyme catalyses L-aspartate 4-semialdehyde + pyruvate = (2S,4S)-4-hydroxy-2,3,4,5-tetrahydrodipicolinate + H2O + H(+). Its pathway is amino-acid biosynthesis; L-lysine biosynthesis via DAP pathway; (S)-tetrahydrodipicolinate from L-aspartate: step 3/4. In terms of biological role, catalyzes the condensation of (S)-aspartate-beta-semialdehyde [(S)-ASA] and pyruvate to 4-hydroxy-tetrahydrodipicolinate (HTPA). This chain is 4-hydroxy-tetrahydrodipicolinate synthase, found in Synechocystis sp. (strain ATCC 27184 / PCC 6803 / Kazusa).